The primary structure comprises 263 residues: Complement C1q tumor necrosis factor-related protein 6 (263 aa).

A signal peptide spans 1-24 (MRVIMGTASLGSIWAVFLLPLVFG). Asn-76 carries N-linked (GlcNAc...) asparagine glycosylation. A disordered region spans residues 80 to 123 (LKGDKGDRGPSGTPGKPGKNGTRGDRGSQGIKGDKGQAGSPGSS). One can recognise a Collagen-like domain in the interval 82-123 (GDKGDRGPSGTPGKPGKNGTRGDRGSQGIKGDKGQAGSPGSS). The C1q domain occupies 124–263 (CQTHYSAFSV…SGHLIKAEDN (140 aa)).

It is found in the secreted. This chain is Complement C1q tumor necrosis factor-related protein 6 (C1qtnf6), found in Rattus norvegicus (Rat).